Reading from the N-terminus, the 343-residue chain is MFNNQMLGVIDETTYKHSLQDLTAQRSLGAIPFAGRYRLIDFMLSNMVNADIRSVAIFPKYRYRSLMDHLGAGKEWDLHRKKDGLFFFPSPHLHHEYDEFGSFRQFSDHLDYFHRSTQQYAVISNSHTVCNIQFQYVLKRHQEVGCDVTEVFQDGQSLQIYIMSTTLLKDLIYGHSEKGYKTIQEAVEKESSALTICPYEYSGYAAVIDSVEKYYTHSMELIQPRFWQQVFLPQQPIYTKVKDEPPTKYGKHSTVKNSLVANGCVLEGEVENCILFRAVHVGKGTKLKNCIIMQKTQIGEDCLLEQVISDKDVKIGKATEAAGTAEQPLVLRKGLVQGELMNS.

Belongs to the bacterial/plant glucose-1-phosphate adenylyltransferase family.

Functionally, required for the synthesis of glycogen. This Bacillus subtilis (strain 168) protein is Glycogen biosynthesis protein GlgD (glgD).